We begin with the raw amino-acid sequence, 128 residues long: UPF0102 protein RPB_0420 (128 aa).

This sequence belongs to the UPF0102 family.

In Rhodopseudomonas palustris (strain HaA2), this protein is UPF0102 protein RPB_0420.